The chain runs to 246 residues: ATP synthase subunit b 1 (246 aa).

Residues 5–27 (WFTFTAQVINFLVLVGLLRYFLY) form a helical membrane-spanning segment.

This sequence belongs to the ATPase B chain family. F-type ATPases have 2 components, F(1) - the catalytic core - and F(0) - the membrane proton channel. F(1) has five subunits: alpha(3), beta(3), gamma(1), delta(1), epsilon(1). F(0) has three main subunits: a(1), b(2) and c(10-14). The alpha and beta chains form an alternating ring which encloses part of the gamma chain. F(1) is attached to F(0) by a central stalk formed by the gamma and epsilon chains, while a peripheral stalk is formed by the delta and b chains.

Its subcellular location is the cell inner membrane. In terms of biological role, f(1)F(0) ATP synthase produces ATP from ADP in the presence of a proton or sodium gradient. F-type ATPases consist of two structural domains, F(1) containing the extramembraneous catalytic core and F(0) containing the membrane proton channel, linked together by a central stalk and a peripheral stalk. During catalysis, ATP synthesis in the catalytic domain of F(1) is coupled via a rotary mechanism of the central stalk subunits to proton translocation. Functionally, component of the F(0) channel, it forms part of the peripheral stalk, linking F(1) to F(0). This Rhodopirellula baltica (strain DSM 10527 / NCIMB 13988 / SH1) protein is ATP synthase subunit b 1.